A 30-amino-acid chain; its full sequence is Brevinin-2Ej (30 aa).

The cysteines at positions 24 and 30 are disulfide-linked.

As to expression, expressed by the skin glands.

The protein localises to the secreted. Functionally, shows antibacterial activity against representative Gram-negative and Gram-positive bacterial species, and hemolytic activity. The chain is Brevinin-2Ej from Pelophylax ridibundus (Marsh frog).